Consider the following 136-residue polypeptide: Secreted RxLR effector protein 63 (136 aa).

The signal sequence occupies residues 1-21; the sequence is MQRFPYSLLLLLLSATNRSRR. The short motif at 43–46 is the RxLR element; it reads RMLR.

This sequence belongs to the RxLR effector family.

It is found in the secreted. Its subcellular location is the host nucleus. Its function is as follows. Effector that partially suppresses the tobacco programmed cell death induced by cell death-inducing proteins. This is Secreted RxLR effector protein 63 from Plasmopara viticola (Downy mildew of grapevine).